Consider the following 494-residue polypeptide: MPLYSVTVKWGKEKFEGVELNTDEPPMVFKAQLFALTGVQPARQKVMVKGGTLKDDDWGNIKIKNGMTLLMMGSADALPEEPSAKTVFVEDMTEEQLASAMELPCGLTNLGNTCYMNATVQCIRSVPELKDALKRYAGALRASGEMASAQYITAALRDLFDSMDKTSSSIPPIILLQFLHMAFPQFAEKGEQGQYLQQDANECWIQMMRVLQQKLEAIEDDSVKETDSSSASAATPSKKKSLIDQFFGVEFETTMKCTESEEEEVTKGKENQLQLSCFINQEVKYLFTGLKLRLQEEITKQSPTLQRNALYIKSSKISRLPAYLTIQMVRFFYKEKESVNAKVLKDVKFPLMLDMYELCTPELQEKMVSFRSKFKDLEDKKVNQQPNTSDKKSSPQKEVKYEPFSFADDIGSNNCGYYDLQAVLTHQGRSSSSGHYVSWVKRKQDEWIKFDDDKVSIVTPEDILRLSGGGDWHIAYVLLYGPRRVEIMEEESEQ.

One can recognise a Ubiquitin-like domain in the interval 4–80 (YSVTVKWGKE…MMGSADALPE (77 aa)). Phosphothreonine is present on Thr52. Positions 105–483 (CGLTNLGNTC…IAYVLLYGPR (379 aa)) constitute a USP domain. Cys114 functions as the Nucleophile in the catalytic mechanism. Phosphoserine is present on residues Ser143 and Ser148. Residue Thr235 is modified to Phosphothreonine. 3 positions are modified to phosphoserine: Ser237, Ser302, and Ser432. His435 functions as the Proton acceptor in the catalytic mechanism. Lys449 bears the N6-acetyllysine mark.

It belongs to the peptidase C19 family. USP14/UBP6 subfamily. In terms of assembly, homodimer (Potential). Associates with the 26S proteasome. Interacts with FANCC, CXCR4 and ERN1. Interacts with TRIM14; this interaction recruits USP14 to cleave ubiquitin chains of CGAS and KDM4D.

The protein localises to the cytoplasm. Its subcellular location is the cell membrane. It carries out the reaction Thiol-dependent hydrolysis of ester, thioester, amide, peptide and isopeptide bonds formed by the C-terminal Gly of ubiquitin (a 76-residue protein attached to proteins as an intracellular targeting signal).. Its function is as follows. Proteasome-associated deubiquitinase which releases ubiquitin from the proteasome targeted ubiquitinated proteins. Ensures the regeneration of ubiquitin at the proteasome. Is a reversibly associated subunit of the proteasome and a large fraction of proteasome-free protein exists within the cell. Required for the degradation of the chemokine receptor CXCR4 which is critical for CXCL12-induced cell chemotaxis. Also serves as a physiological inhibitor of endoplasmic reticulum-associated degradation (ERAD) under the non-stressed condition by inhibiting the degradation of unfolded endoplasmic reticulum proteins via interaction with ERN1. Indispensable for synaptic development and function at neuromuscular junctions (NMJs). Plays a role in the innate immune defense against viruses by stabilizing the viral DNA sensor CGAS and thus inhibiting its autophagic degradation. Inhibits OPTN-mediated selective autophagic degradation of KDM4D and thereby negatively regulates H3K9me2 and H3K9me3. This is Ubiquitin carboxyl-terminal hydrolase 14 (USP14) from Homo sapiens (Human).